Reading from the N-terminus, the 67-residue chain is Beta-defensin 103A (67 aa).

Positions 1 to 22 (MRIHYLLFALLFLFLVPVPGHG) are cleaved as a signal peptide. 3 disulfide bridges follow: Cys-33–Cys-62, Cys-40–Cys-55, and Cys-45–Cys-63.

The protein belongs to the beta-defensin family.

The protein resides in the secreted. Exhibits antimicrobial activity against Gram-positive and Gram-negative bacteria. This is Beta-defensin 103A (DEFB103A) from Pan troglodytes (Chimpanzee).